The chain runs to 334 residues: Glyoxylate reductase (334 aa).

NADP(+) contacts are provided by residues phenylalanine 158–isoleucine 161, serine 180–threonine 182, and isoleucine 239–arginine 241. Active-site residues include arginine 241 and glutamate 270. Histidine 288 (proton donor) is an active-site residue. Histidine 288 to glycine 290 lines the NADP(+) pocket.

Belongs to the D-isomer specific 2-hydroxyacid dehydrogenase family. GyaR subfamily. In terms of assembly, homodimer.

The protein resides in the cytoplasm. It catalyses the reaction glycolate + NAD(+) = glyoxylate + NADH + H(+). This Thermococcus onnurineus (strain NA1) protein is Glyoxylate reductase.